The sequence spans 628 residues: DEAD-box ATP-dependent RNA helicase 9 (628 aa).

Positions 98–126 (LEVAKLGISPKIVSQLASRGITKLFPIQR) match the Q motif motif. Residues 129–302 (LEPAMQGKDM…QKYLKNPVTI (174 aa)) enclose the Helicase ATP-binding domain. ATP is bound at residue 142–149 (AKTGTGKT). The DEAD box motif lies at 250–253 (DEAD). Positions 331 to 478 (VLGELIKEHA…KINVEGSDLM (148 aa)) constitute a Helicase C-terminal domain. Disordered stretches follow at residues 496-548 (GSYG…SGFG) and 571-628 (SGFG…FGSS). Residues 500–509 (RRGSFGSSSS) are compositionally biased toward low complexity. The span at 510–548 (RGGGFGDSGFGRSGGGFGRSGGGGFGRSSGGGFGDSGFG) shows a compositional bias: gly residues.

Belongs to the DEAD box helicase family. DDX21/DDX50 subfamily.

It catalyses the reaction ATP + H2O = ADP + phosphate + H(+). This Oryza sativa subsp. japonica (Rice) protein is DEAD-box ATP-dependent RNA helicase 9.